A 183-amino-acid polypeptide reads, in one-letter code: Large ribosomal subunit protein uL5 (183 aa).

Belongs to the universal ribosomal protein uL5 family. In terms of assembly, part of the 50S ribosomal subunit; part of the 5S rRNA/L5/L18/L25 subcomplex. Contacts the 5S rRNA and the P site tRNA. Forms a bridge to the 30S subunit in the 70S ribosome.

This is one of the proteins that bind and probably mediate the attachment of the 5S RNA into the large ribosomal subunit, where it forms part of the central protuberance. In the 70S ribosome it contacts protein S13 of the 30S subunit (bridge B1b), connecting the 2 subunits; this bridge is implicated in subunit movement. Contacts the P site tRNA; the 5S rRNA and some of its associated proteins might help stabilize positioning of ribosome-bound tRNAs. This is Large ribosomal subunit protein uL5 from Corynebacterium aurimucosum (strain ATCC 700975 / DSM 44827 / CIP 107346 / CN-1) (Corynebacterium nigricans).